Reading from the N-terminus, the 260-residue chain is Small ribosomal subunit protein uS2 (260 aa).

This sequence belongs to the universal ribosomal protein uS2 family.

This chain is Small ribosomal subunit protein uS2, found in Roseobacter denitrificans (strain ATCC 33942 / OCh 114) (Erythrobacter sp. (strain OCh 114)).